Here is a 531-residue protein sequence, read N- to C-terminus: 2,3-bisphosphoglycerate-independent phosphoglycerate mutase (531 aa).

Residues Asp-13 and Ser-63 each contribute to the Mn(2+) site. The active-site Phosphoserine intermediate is the Ser-63. Residues His-124, 154-155, Arg-187, Arg-193, 261-264, and Lys-342 contribute to the substrate site; these read RD and RPDR. The Mn(2+) site is built by Asp-420, His-424, Asp-462, His-463, and His-480.

It belongs to the BPG-independent phosphoglycerate mutase family. Monomer. Mn(2+) serves as cofactor.

The enzyme catalyses (2R)-2-phosphoglycerate = (2R)-3-phosphoglycerate. It functions in the pathway carbohydrate degradation; glycolysis; pyruvate from D-glyceraldehyde 3-phosphate: step 3/5. In terms of biological role, catalyzes the interconversion of 2-phosphoglycerate and 3-phosphoglycerate. The polypeptide is 2,3-bisphosphoglycerate-independent phosphoglycerate mutase (Mycoplasma mycoides subsp. mycoides SC (strain CCUG 32753 / NCTC 10114 / PG1)).